Reading from the N-terminus, the 325-residue chain is 7,8-didemethyl-8-hydroxy-5-deazariboflavin synthase (325 aa).

The Radical SAM core domain occupies Met1–Asn241. Residues Cys15, Cys19, and Cys22 each contribute to the [4Fe-4S] cluster site.

Belongs to the radical SAM superfamily. CofG family. In terms of assembly, consists of two subunits, CofG and CofH. The cofactor is [4Fe-4S] cluster.

It catalyses the reaction 5-amino-5-(4-hydroxybenzyl)-6-(D-ribitylimino)-5,6-dihydrouracil + S-adenosyl-L-methionine = 7,8-didemethyl-8-hydroxy-5-deazariboflavin + 5'-deoxyadenosine + L-methionine + NH4(+) + H(+). Its pathway is cofactor biosynthesis; coenzyme F0 biosynthesis. In terms of biological role, catalyzes the radical-mediated synthesis of 7,8-didemethyl-8-hydroxy-5-deazariboflavin from 5-amino-5-(4-hydroxybenzyl)-6-(D-ribitylimino)-5,6-dihydrouracil. The polypeptide is 7,8-didemethyl-8-hydroxy-5-deazariboflavin synthase (Methanosarcina barkeri (strain Fusaro / DSM 804)).